The sequence spans 302 residues: Succinate--CoA ligase [ADP-forming] subunit alpha (302 aa).

Residues 17–20, K43, and 96–98 contribute to the CoA site; these read TGST and ITE. Y159 serves as a coordination point for substrate. H247 functions as the Tele-phosphohistidine intermediate in the catalytic mechanism.

The protein belongs to the succinate/malate CoA ligase alpha subunit family. As to quaternary structure, heterotetramer of two alpha and two beta subunits.

The enzyme catalyses succinate + ATP + CoA = succinyl-CoA + ADP + phosphate. It catalyses the reaction GTP + succinate + CoA = succinyl-CoA + GDP + phosphate. It functions in the pathway carbohydrate metabolism; tricarboxylic acid cycle; succinate from succinyl-CoA (ligase route): step 1/1. Succinyl-CoA synthetase functions in the citric acid cycle (TCA), coupling the hydrolysis of succinyl-CoA to the synthesis of either ATP or GTP and thus represents the only step of substrate-level phosphorylation in the TCA. The alpha subunit of the enzyme binds the substrates coenzyme A and phosphate, while succinate binding and nucleotide specificity is provided by the beta subunit. The sequence is that of Succinate--CoA ligase [ADP-forming] subunit alpha from Staphylococcus epidermidis (strain ATCC 35984 / DSM 28319 / BCRC 17069 / CCUG 31568 / BM 3577 / RP62A).